The following is a 228-amino-acid chain: PKHD-type hydroxylase Reut_A2877 (228 aa).

A Fe2OG dioxygenase domain is found at Ile80–Ser180. Residues His98, Asp100, and His161 each contribute to the Fe cation site. Residue Arg171 participates in 2-oxoglutarate binding.

It depends on Fe(2+) as a cofactor. L-ascorbate serves as cofactor.

In Cupriavidus pinatubonensis (strain JMP 134 / LMG 1197) (Cupriavidus necator (strain JMP 134)), this protein is PKHD-type hydroxylase Reut_A2877.